Here is a 443-residue protein sequence, read N- to C-terminus: Chromosome partition protein MukF (443 aa).

Residues 209 to 237 form a leucine-zipper region; the sequence is LDETSGNLRELQDVLNASGDKLQSQLLRI.

This sequence belongs to the MukF family. As to quaternary structure, interacts, and probably forms a ternary complex, with MukE and MukB via its C-terminal region. The complex formation is stimulated by calcium or magnesium. It is required for an interaction between MukE and MukB.

It localises to the cytoplasm. The protein localises to the nucleoid. Its function is as follows. Involved in chromosome condensation, segregation and cell cycle progression. May participate in facilitating chromosome segregation by condensation DNA from both sides of a centrally located replisome during cell division. Not required for mini-F plasmid partitioning. Probably acts via its interaction with MukB and MukE. Overexpression results in anucleate cells. It has a calcium binding activity. This chain is Chromosome partition protein MukF, found in Glaesserella parasuis serovar 5 (strain SH0165) (Haemophilus parasuis).